A 316-amino-acid chain; its full sequence is Probable cell division protein WhiA (316 aa).

Positions 280 to 313 (SLKELGEMLEPPVGKSGVNHRLRKIEKIAEELRT) form a DNA-binding region, H-T-H motif.

Belongs to the WhiA family.

In terms of biological role, involved in cell division and chromosome segregation. This Clostridium perfringens (strain 13 / Type A) protein is Probable cell division protein WhiA.